Here is a 363-residue protein sequence, read N- to C-terminus: Chorismate synthase (363 aa).

NADP(+) is bound at residue arginine 48. FMN contacts are provided by residues 125-127 (RSS), 238-239 (NA), glycine 278, 293-297 (KPTAS), and arginine 319.

This sequence belongs to the chorismate synthase family. In terms of assembly, homotetramer. FMNH2 is required as a cofactor.

The enzyme catalyses 5-O-(1-carboxyvinyl)-3-phosphoshikimate = chorismate + phosphate. It functions in the pathway metabolic intermediate biosynthesis; chorismate biosynthesis; chorismate from D-erythrose 4-phosphate and phosphoenolpyruvate: step 7/7. Its function is as follows. Catalyzes the anti-1,4-elimination of the C-3 phosphate and the C-6 proR hydrogen from 5-enolpyruvylshikimate-3-phosphate (EPSP) to yield chorismate, which is the branch point compound that serves as the starting substrate for the three terminal pathways of aromatic amino acid biosynthesis. This reaction introduces a second double bond into the aromatic ring system. In Acinetobacter baumannii (strain ACICU), this protein is Chorismate synthase.